A 477-amino-acid chain; its full sequence is Protoporphyrinogen oxidase (477 aa).

Residues 9–14 (GGGISG), W42, 57–60 (GPRG), V257, A449, and 454–456 (VAV) each bind FAD.

This sequence belongs to the protoporphyrinogen/coproporphyrinogen oxidase family. Protoporphyrinogen oxidase subfamily. As to quaternary structure, monomer. Homodimer. FAD serves as cofactor. As to expression, detected in liver (at protein level).

Its subcellular location is the mitochondrion inner membrane. The enzyme catalyses protoporphyrinogen IX + 3 O2 = protoporphyrin IX + 3 H2O2. Its pathway is porphyrin-containing compound metabolism; protoporphyrin-IX biosynthesis; protoporphyrin-IX from protoporphyrinogen-IX: step 1/1. In terms of biological role, catalyzes the 6-electron oxidation of protoporphyrinogen-IX to form protoporphyrin-IX. The polypeptide is Protoporphyrinogen oxidase (PPOX) (Bos taurus (Bovine)).